Reading from the N-terminus, the 578-residue chain is Leucine-rich repeat-containing protein 15 (578 aa).

The N-terminal stretch at 1 to 21 is a signal peptide; it reads MPLKHYLLLLVGCQAWALGLA. Residues 22–53 form the LRRNT domain; sequence YYGCPSECTCSRASQVECTGARIVAMPTPLPW. The Extracellular portion of the chain corresponds to 22–535; the sequence is YYGCPSECTC…TWGMTEAQSG (514 aa). LRR repeat units follow at residues 54-75, 78-99, 102-123, 126-147, 150-171, 174-195, 198-219, 222-243, 246-267, 270-291, 294-315, 318-339, 342-363, 366-387, and 390-411; these read NAMS…LFLN, ALIA…AFRN, SLRY…VFQD, NLES…QFSQ, NLRE…AFDH, GLTK…LFQH, NLQV…TFDA, NLQE…LFHN, NLQR…IFMQ, QLNK…VFGP, NLRE…TFSH, QLQV…AFNG, NLRE…VFRS, NLQN…IFAN, and GLTT…IFDH. Asparagine 75 is a glycosylation site (N-linked (GlcNAc...) asparagine). Asparagine 369 is a glycosylation site (N-linked (GlcNAc...) asparagine). Residues 423 to 473 form the LRRCT domain; it reads NPWRCDSDILPLHNWLLLNRARLGTDTLPVCSSPANVRGQSLVIININFPG. Residues 476-500 form a disordered region; sequence VQGPETPEVPSYPDTPSYPDTTSVS. A helical transmembrane segment spans residues 536 to 556; sequence LAIAAIVIGIIALACSLAACI. At 557 to 578 the chain is on the cytoplasmic side; that stretch reads CCCCCKKRSQAVLMQMKAPNEC.

The protein resides in the cell membrane. The polypeptide is Leucine-rich repeat-containing protein 15 (Lrrc15) (Rattus norvegicus (Rat)).